The chain runs to 301 residues: tRNA-cytidine(32) 2-sulfurtransferase (301 aa).

The short motif at S55 to S60 is the PP-loop motif element. [4Fe-4S] cluster-binding residues include C130, C133, and C221.

It belongs to the TtcA family. Homodimer. Requires Mg(2+) as cofactor. [4Fe-4S] cluster is required as a cofactor.

Its subcellular location is the cytoplasm. The enzyme catalyses cytidine(32) in tRNA + S-sulfanyl-L-cysteinyl-[cysteine desulfurase] + AH2 + ATP = 2-thiocytidine(32) in tRNA + L-cysteinyl-[cysteine desulfurase] + A + AMP + diphosphate + H(+). It functions in the pathway tRNA modification. In terms of biological role, catalyzes the ATP-dependent 2-thiolation of cytidine in position 32 of tRNA, to form 2-thiocytidine (s(2)C32). The sulfur atoms are provided by the cysteine/cysteine desulfurase (IscS) system. The sequence is that of tRNA-cytidine(32) 2-sulfurtransferase from Acinetobacter baumannii (strain AB307-0294).